We begin with the raw amino-acid sequence, 71 residues long: High-potential iron-sulfur protein isozyme 2 (71 aa).

Residues cysteine 34, cysteine 37, cysteine 51, and cysteine 65 each coordinate [4Fe-4S] cluster.

This sequence belongs to the high-potential iron-sulfur protein (HiPIP) family. In terms of assembly, homodimer.

Specific class of high-redox-potential 4Fe-4S ferredoxins. Functions in anaerobic electron transport in most purple and in some other photosynthetic bacteria and in at least one genus (Paracoccus) of halophilic, denitrifying bacteria. The protein is High-potential iron-sulfur protein isozyme 2 (hip2) of Ectothiorhodospira shaposhnikovii (Ectothiorhodospira vacuolata).